Here is a 172-residue protein sequence, read N- to C-terminus: Major exported protein (172 aa).

It belongs to the hcp1 family.

It is found in the secreted. This chain is Major exported protein (hcpA), found in Pseudomonas aeruginosa (strain ATCC 15692 / DSM 22644 / CIP 104116 / JCM 14847 / LMG 12228 / 1C / PRS 101 / PAO1).